We begin with the raw amino-acid sequence, 380 residues long: tRNA-specific 2-thiouridylase MnmA (380 aa).

Residues 6–13 (ALSGGVDS) and Met32 contribute to the ATP site. Cys101 (nucleophile) is an active-site residue. Cys101 and Cys199 are disulfide-bonded. Gly125 lines the ATP pocket. Positions 148–150 (KDQ) are interaction with tRNA. Cys199 acts as the Cysteine persulfide intermediate in catalysis.

The protein belongs to the MnmA/TRMU family.

The protein localises to the cytoplasm. It carries out the reaction S-sulfanyl-L-cysteinyl-[protein] + uridine(34) in tRNA + AH2 + ATP = 2-thiouridine(34) in tRNA + L-cysteinyl-[protein] + A + AMP + diphosphate + H(+). Functionally, catalyzes the 2-thiolation of uridine at the wobble position (U34) of tRNA, leading to the formation of s(2)U34. The protein is tRNA-specific 2-thiouridylase MnmA of Beutenbergia cavernae (strain ATCC BAA-8 / DSM 12333 / CCUG 43141 / JCM 11478 / NBRC 16432 / NCIMB 13614 / HKI 0122).